Here is a 244-residue protein sequence, read N- to C-terminus: 1-(5-phosphoribosyl)-5-[(5-phosphoribosylamino)methylideneamino] imidazole-4-carboxamide isomerase (244 aa).

The active-site Proton acceptor is aspartate 8. Aspartate 129 acts as the Proton donor in catalysis.

This sequence belongs to the HisA/HisF family.

The protein resides in the cytoplasm. It catalyses the reaction 1-(5-phospho-beta-D-ribosyl)-5-[(5-phospho-beta-D-ribosylamino)methylideneamino]imidazole-4-carboxamide = 5-[(5-phospho-1-deoxy-D-ribulos-1-ylimino)methylamino]-1-(5-phospho-beta-D-ribosyl)imidazole-4-carboxamide. It functions in the pathway amino-acid biosynthesis; L-histidine biosynthesis; L-histidine from 5-phospho-alpha-D-ribose 1-diphosphate: step 4/9. The protein is 1-(5-phosphoribosyl)-5-[(5-phosphoribosylamino)methylideneamino] imidazole-4-carboxamide isomerase of Allorhizobium ampelinum (strain ATCC BAA-846 / DSM 112012 / S4) (Agrobacterium vitis (strain S4)).